Reading from the N-terminus, the 62-residue chain is Temporin-La (62 aa).

The signal sequence occupies residues 1 to 22 (MFPLKKSLLLLFFLGTINLSFC). Residues 23–47 (EEERDVDQDERRDDPGERNVQVEKR) constitute a propeptide that is removed on maturation. Position 60 is a leucine amide (leucine 60).

This sequence belongs to the frog skin active peptide (FSAP) family. Temporin subfamily. Expressed by the skin glands.

Its subcellular location is the secreted. The protein resides in the target cell membrane. Functionally, antimicrobial peptide with amphipathic alpha-helical structure that acts against both Gram-positive and Gram-negative bacteria and the fungus Candida albicans. Is active against S.aureus ATCC 25923 (MIC=2.5 ug/ml), S.suis 2 CVCC 606 (MIC=15.6 ug/ml), Salmonella ATCC 20020 (MIC=15.6 ug/ml), P.aeruginosa ATCC 227853 (MIC=60 ug/ml), and C.albicans ATCC10231 (MIC=31.25 ug/ml). Is not active against B.subtilis ADB403, E.coli ATCC 25922, and K.pneumoniae ATCC 700603. Also shows a strong antitumor activity, but no hemolytic activity. The sequence is that of Temporin-La from Aquarana catesbeiana (American bullfrog).